The following is a 271-amino-acid chain: MAFKFKTFAAVGALIGSLALAGCGQDEKDPNHIKVGVIVGAEQQVAEVAQKVAKEKYGLDVELVTFNDYVLPNEALSKGDIDANAFQHKPYLDQQIKDRGYKLVSVGKTFVYPIAGYSKKIKSLDELKDGSQVAVPNDPTNLGRSLLLLQKVGLIKLKDGVSLLPTSLDIVENPKNLKIVELEAPQLPRSLDDAQIALAVINTTYASQIGLTPAKDGIFVEDKDSPYVNLIVTREDNKDAENVKKFVQAYQSDEVYEAANKVFNGGAVKGW.

Positions 1-22 are cleaved as a signal peptide; sequence MAFKFKTFAAVGALIGSLALAG. Cysteine 23 carries N-palmitoyl cysteine lipidation. Cysteine 23 is lipidated: S-diacylglycerol cysteine.

The protein belongs to the NlpA lipoprotein family.

The protein resides in the cell membrane. Its function is as follows. This protein is a component of a D-methionine permease, a binding protein-dependent, ATP-driven transport system. The polypeptide is D-methionine-binding lipoprotein MetQ (metQ) (Salmonella typhi).